A 72-amino-acid polypeptide reads, in one-letter code: Translation initiation factor IF-1 (72 aa).

The 72-residue stretch at 1–72 (MAKDDVIEVE…TRGRITYRFK (72 aa)) folds into the S1-like domain.

This sequence belongs to the IF-1 family. As to quaternary structure, component of the 30S ribosomal translation pre-initiation complex which assembles on the 30S ribosome in the order IF-2 and IF-3, IF-1 and N-formylmethionyl-tRNA(fMet); mRNA recruitment can occur at any time during PIC assembly.

The protein localises to the cytoplasm. In terms of biological role, one of the essential components for the initiation of protein synthesis. Stabilizes the binding of IF-2 and IF-3 on the 30S subunit to which N-formylmethionyl-tRNA(fMet) subsequently binds. Helps modulate mRNA selection, yielding the 30S pre-initiation complex (PIC). Upon addition of the 50S ribosomal subunit IF-1, IF-2 and IF-3 are released leaving the mature 70S translation initiation complex. This chain is Translation initiation factor IF-1, found in Streptococcus gordonii (strain Challis / ATCC 35105 / BCRC 15272 / CH1 / DL1 / V288).